A 535-amino-acid polypeptide reads, in one-letter code: Probable serine/threonine protein phosphatase 2A regulatory subunit B''delta (535 aa).

The disordered stretch occupies residues 67–104; sequence SGTNSGSNSPLASMFPARNGPPLSPRNSTGSPRIARQR. 2 EF-hand domains span residues 174–209 and 387–422; these read VPSF…GNML and SSEP…QLHR. The Ca(2+) site is built by Asp400, Asp402, Asn404, and Glu411.

As to quaternary structure, PP2A consists of a common heterodimeric core enzyme, composed of a 36 kDa catalytic subunit (subunit C) and a 65 kDa constant regulatory subunit (PR65 or subunit A), that associates with a variety of regulatory subunits. Proteins that associate with the core dimer include three families of regulatory subunits B (the R2/B/PR55/B55, R3/B''/PR72/PR130/PR59 and R5/B'/B56 families) and cell signaling molecules.

In terms of biological role, probable regulatory subunit of type 2A protein phosphatase. In Arabidopsis thaliana (Mouse-ear cress), this protein is Probable serine/threonine protein phosphatase 2A regulatory subunit B''delta (B''DELTA).